A 917-amino-acid polypeptide reads, in one-letter code: MDTCVFPLVVLWISMRITSTLDEVPIGGIFDSRSVQALTAFRHEIHMFNRAYSHVYRYKLKNDTTILDVTDSFAVSNALCHHLSRGDLAIFGVSNASSLATIQSYTDTFNVPFVTISMAQNNSHNGSYQIYMRPMYINALVDVIVHYRWEKVAFYYDSDEGLVRLQQLFQATNKYDKMIISIDTKRITSVENGYHMLKELHLMDPEMEHRVLLDVRTDKAEQIILKVMNDSKINNAKFHFLLGDLGMLEINTTHFKIGGVNITGFQLVDPFNSTSELFISTWSSLDPVYWPGAGTNHVNYEAALAADSVRLFKSAFGSILQKDPNFLRRSRSGTAGKSMKCTDDSEIKTGHGQMILEEMKKVKFEGVTGHVAFNEQGHRKDFTLGVYNVAMTRGTAKIGYWNEREGKLHAHNPRLFQNNSSDMNRTRIVTTIIKEPYVMVNNVIRDGKPLVGNEPVEGFCIDLTKAVAEKVGFDFVIQFVKDGSYGSVLSNGTWDGIVGELIRHEADMAIAPFTITADRSRVIDFTKPFMSLGISIMIKRPQPAGKHFFSFMEPLSSEIWMCIVFAYIGVSVVLFLVSRFSPNEWHLSEAHHSYIANDFSISNSLWFSLGAFMQQGCDISPRSMSGRIVGSVWWFFTLIIISSYTANLAAFLTVERMLTPIDSAEDLARQTEIQYGTIMSGSTKAFFKNSQFQTYQRMWAYMTSAQPSVFVKTHEEGIQRVRQSNGKYAYLTESSTIDYVSNRKPCDTLKVGSNLNSDGFGIGTPVGSDLRDKLNFSVLELRENGDLAKWEKIWFDRGECPQHSSNKEGAQSALTLANVAGIFYILIGGLVVAVLSAAFEFLYKSRMDSRKSRMSFGSALRTKARLSFKGHIDSEQKTTGNGTRRRSHNSVTYTYTGPTNVMGGSHAFEDSNTHTEV.

The N-terminal stretch at 1 to 19 is a signal peptide; sequence MDTCVFPLVVLWISMRITS. The Extracellular segment spans residues 20-556; the sequence is TLDEVPIGGI…HFFSFMEPLS (537 aa). 12 N-linked (GlcNAc...) asparagine glycosylation sites follow: Asn62, Asn95, Asn121, Asn125, Asn229, Asn251, Asn261, Asn272, Asn418, Asn419, Asn424, and Asn491. The helical transmembrane segment at 557–577 threads the bilayer; it reads SEIWMCIVFAYIGVSVVLFLV. At 578–631 the chain is on the cytoplasmic side; that stretch reads SRFSPNEWHLSEAHHSYIANDFSISNSLWFSLGAFMQQGCDISPRSMSGRIVGS. A helical transmembrane segment spans residues 632–652; the sequence is VWWFFTLIIISSYTANLAAFL. Topologically, residues 653 to 818 are extracellular; it reads TVERMLTPID…GAQSALTLAN (166 aa). N-linked (GlcNAc...) asparagine glycosylation is present at Asn775. Residues 819–839 traverse the membrane as a helical segment; sequence VAGIFYILIGGLVVAVLSAAF. At 840–917 the chain is on the cytoplasmic side; sequence EFLYKSRMDS…FEDSNTHTEV (78 aa). Residues 871–896 form a disordered region; it reads HIDSEQKTTGNGTRRRSHNSVTYTYT.

It belongs to the glutamate-gated ion channel (TC 1.A.10.1) family.

The protein resides in the cell membrane. It is found in the postsynaptic cell membrane. Its function is as follows. Receptor for glutamate. L-glutamate acts as an excitatory neurotransmitter at many synapses in the central nervous system. The postsynaptic actions of Glu are mediated by a variety of receptors. In Lymnaea stagnalis (Great pond snail), this protein is Glutamate receptor.